Here is a 78-residue protein sequence, read N- to C-terminus: Antimicrobial peptide marcin-18 (78 aa).

A signal peptide spans 1-23; the sequence is MQFKKQLMVIFLAYFLVVNESEA. Position 41 is an arginine amide (arginine 41). A propeptide spanning residues 42-78 is cleaved from the precursor; sequence RKNQRSRSIMKRDLENLFDPYQRNLELDRLLKQLPNY.

Belongs to the non-disulfide-bridged peptide (NDBP) superfamily. Medium-length antimicrobial peptide (group 3) family. In terms of tissue distribution, expressed by the venom gland.

Its subcellular location is the secreted. It localises to the target cell membrane. In terms of biological role, antimicrobial peptide with potent activity against bacteria. Acts by fastly disrupting the bacterial membrane. Shows activity against Gram-positive bacteria S.aureus (MIC=1.5-2.9 uM) and S.epidermidis (MIC=2.9 uM), M.luteus (MIC=23.4 uM), B.thuringiensis (MIC=2.9 uM), B.subtilis (MIC=2.9 uM) and Gram-negative bacteria E.coli (MIC=5.9-11.7 uM) and P.aeruginosa (MIC=5.9 uM), as well as against penicillin (MIC=2.9 uM) and methicillin (MIC=1.5-2.9 uM) resistant bacteria. Antibiotic activity is not affected by major negatively charged components of the prokaryotic cell wall (e.g. lipopolysaccharides and lipoteichoic acid). In vivo, in a mouse model of lethal peritonitis, shows potent antibiotic activity without cytotoxicity, improving the survival rate. In Olivierus martensii (Manchurian scorpion), this protein is Antimicrobial peptide marcin-18.